A 62-amino-acid polypeptide reads, in one-letter code: Large ribosomal subunit protein bL32 (62 aa).

Over residues 1-16 (MAVPKRKTSPMKRGFR) the composition is skewed to basic residues. The tract at residues 1-62 (MAVPKRKTSP…QILTPKNKEA (62 aa)) is disordered. Over residues 28–44 (VEDKDSGELRRPHHVDL) the composition is skewed to basic and acidic residues.

It belongs to the bacterial ribosomal protein bL32 family.

This is Large ribosomal subunit protein bL32 from Methylocella silvestris (strain DSM 15510 / CIP 108128 / LMG 27833 / NCIMB 13906 / BL2).